We begin with the raw amino-acid sequence, 254 residues long: Thiazole synthase (254 aa).

The active-site Schiff-base intermediate with DXP is the Lys-96. Residues Gly-157, 183 to 184 (AG), and 205 to 206 (NT) contribute to the 1-deoxy-D-xylulose 5-phosphate site.

It belongs to the ThiG family. Homotetramer. Forms heterodimers with either ThiH or ThiS.

It is found in the cytoplasm. It catalyses the reaction [ThiS sulfur-carrier protein]-C-terminal-Gly-aminoethanethioate + 2-iminoacetate + 1-deoxy-D-xylulose 5-phosphate = [ThiS sulfur-carrier protein]-C-terminal Gly-Gly + 2-[(2R,5Z)-2-carboxy-4-methylthiazol-5(2H)-ylidene]ethyl phosphate + 2 H2O + H(+). It functions in the pathway cofactor biosynthesis; thiamine diphosphate biosynthesis. Its function is as follows. Catalyzes the rearrangement of 1-deoxy-D-xylulose 5-phosphate (DXP) to produce the thiazole phosphate moiety of thiamine. Sulfur is provided by the thiocarboxylate moiety of the carrier protein ThiS. In vitro, sulfur can be provided by H(2)S. In Clostridium perfringens (strain SM101 / Type A), this protein is Thiazole synthase.